The primary structure comprises 273 residues: SKA complex subunit 1 homolog (273 aa).

Residues 77 to 97 (KKLVQRSLKEEEKLQHMLANL) are a coiled coil.

It belongs to the SKA1 family.

The chain is SKA complex subunit 1 homolog from Zea mays (Maize).